The primary structure comprises 400 residues: Keratin, type I cytoskeletal 19 (400 aa).

Positions 1–79 (MTSYSYRQSS…TASDGLLAGN (79 aa)) are head. Arginine 7 is subject to Omega-N-methylarginine. Residues serine 14 and serine 22 each carry the phosphoserine modification. Asymmetric dimethylarginine; alternate is present on arginine 24. At arginine 24 the chain carries Omega-N-methylarginine; alternate. Residue arginine 32 is modified to Omega-N-methylarginine. Residues serine 35 and serine 40 each carry the phosphoserine modification. Omega-N-methylarginine is present on residues arginine 43 and arginine 51. Serine 57 and serine 72 each carry phosphoserine. The tract at residues 80–115 (EKLTMQNLNDRLASYLDKVRALEAANGELEVKIRDW) is coil 1A. Residues 80-391 (EKLTMQNLND…SLLEGQEDHY (312 aa)) form the IF rod domain. The tract at residues 116–133 (YQKQGPGPSRDYSHYYTT) is linker 1. Residues 134–225 (IQDLRDKILG…KNHEEEISTL (92 aa)) form a coil 1B region. Residues 226–248 (RGQVGGQVSVEVDSAPGTDLAKI) are linker 12. The segment at 244 to 390 (DLAKILSDMR…RSLLEGQEDH (147 aa)) is necessary for interaction with PNN. The interval 249-387 (LSDMRSQYEV…ATYRSLLEGQ (139 aa)) is coil 2. Threonine 323 carries the phosphothreonine modification. Residues 388–400 (EDHYSNLSASKVL) form a rod-like helical tail region. Phosphotyrosine is present on tyrosine 391. The residue at position 395 (serine 395) is a Phosphoserine.

The protein belongs to the intermediate filament family. As to quaternary structure, heterotetramer of two type I and two type II keratins. Interacts with PNN and the actin-binding domain of DMD.

In terms of biological role, involved in the organization of myofibers. Together with KRT8, helps to link the contractile apparatus to dystrophin at the costameres of striated muscle. In Pongo abelii (Sumatran orangutan), this protein is Keratin, type I cytoskeletal 19.